Reading from the N-terminus, the 579-residue chain is Pentatricopeptide repeat-containing protein At2g15690, mitochondrial (579 aa).

Residues 1-49 constitute a mitochondrion transit peptide; the sequence is MSSLMAIRCARTQNIVTIGSLLQLRSSFPRLSSQFHFSGTLNSIPIKHL. 2 stretches are compositionally biased toward polar residues: residues 56-71 and 78-103; these read NDYHQNPQSGSPSQHQ and SFDSQNQTNTNQRVPQSPNQWSTQHG. Positions 56–208 are disordered; the sequence is NDYHQNPQSG…QMNEVAPPPS (153 aa). 2 stretches are compositionally biased toward low complexity: residues 117-136 and 148-199; these read GGQRPPYGGQNPQQGGQMSQ and RPQY…SPNQ. 5 PPR repeats span residues 235–269, 270–300, 301–335, 336–371, and 372–402; these read DRECFVLLFESCANLKSLEHSKKVHDHFLQSKFRG, DPKLNNMVISMFGECSSITDAKRVFDHMVDK, DMDSWHLMMCAYSDNGMGDDALHLFEEMTKHGLKP, NEETFLTVFLACATVGGIEEAFLHFDSMKNEHGISP, and KTEHYLGVLGVLGKCGHLVEAEQYIRDLPFE. The segment at 485–579 is type DYW motif; it reads GVVYVPDTRF…DGKCSCGDYW (95 aa).

The protein belongs to the PPR family. PCMP-H subfamily.

Its subcellular location is the mitochondrion. This chain is Pentatricopeptide repeat-containing protein At2g15690, mitochondrial (PCMP-H66), found in Arabidopsis thaliana (Mouse-ear cress).